The sequence spans 353 residues: Variable large protein 17 (353 aa).

A signal peptide spans Met-1–Ser-18. Cys-19 is lipidated: N-palmitoyl cysteine. Cys-19 carries the S-diacylglycerol cysteine lipid modification. Positions Glu-332–Asn-353 are disordered. Polar residues predominate over residues Glu-337–Asn-353.

It belongs to the variable large protein (Vlp) family. Delta subfamily.

Its subcellular location is the cell outer membrane. Its function is as follows. The Vlp and Vsp proteins are antigenically distinct proteins, only one vlp or vsp gene is transcriptionally active at any one time. Switching between these genes is a mechanism of host immune response evasion. The sequence is that of Variable large protein 17 from Borrelia hermsii.